Here is a 35-residue protein sequence, read N- to C-terminus: Beta-amanitin proprotein (35 aa).

The propeptide occupies 1–10; the sequence is MSDINATRLP. Residues 11–18 constitute a cross-link (cyclopeptide (Ile-Pro)); the sequence is IWGIGCDP. The 2'-cysteinyl-6'-hydroxytryptophan sulfoxide (Trp-Cys) cross-link spans 12 to 16; the sequence is WGIGC. The propeptide occupies 19 to 35; sequence CVGDDVTALLTRGEALC.

It belongs to the MSDIN fungal toxin family. Post-translationally, processed by the macrocyclase-peptidase enzyme POPB to yield a toxic cyclic octapeptide. POPB first removes 10 residues from the N-terminus. Conformational trapping of the remaining peptide forces the enzyme to release this intermediate rather than proceed to macrocyclization. The enzyme rebinds the remaining peptide in a different conformation and catalyzes macrocyclization of the N-terminal 8 residues. Expressed in basidiocarps.

Toxin belonging to the bicyclic octapeptides amatoxins that acts by binding non-competitively to RNA polymerase II and greatly slowing the elongation of transcripts from target promoters. The protein is Beta-amanitin proprotein of Amanita exitialis (Guangzhou destroying angel).